The primary structure comprises 356 residues: Histidinol-phosphate aminotransferase (356 aa).

Lys214 bears the N6-(pyridoxal phosphate)lysine mark.

Belongs to the class-II pyridoxal-phosphate-dependent aminotransferase family. Histidinol-phosphate aminotransferase subfamily. In terms of assembly, homodimer. Pyridoxal 5'-phosphate is required as a cofactor.

It carries out the reaction L-histidinol phosphate + 2-oxoglutarate = 3-(imidazol-4-yl)-2-oxopropyl phosphate + L-glutamate. It functions in the pathway amino-acid biosynthesis; L-histidine biosynthesis; L-histidine from 5-phospho-alpha-D-ribose 1-diphosphate: step 7/9. This chain is Histidinol-phosphate aminotransferase, found in Escherichia coli (strain SMS-3-5 / SECEC).